A 473-amino-acid polypeptide reads, in one-letter code: Photosystem II CP43 reaction center protein (473 aa).

A propeptide spanning residues methionine 1–glutamate 14 is cleaved from the precursor. Threonine 15 is modified (N-acetylthreonine). Threonine 15 carries the post-translational modification Phosphothreonine. A run of 5 helical transmembrane segments spans residues leucine 69–alanine 93, leucine 134–asparagine 155, lysine 178–threonine 200, lysine 255–serine 275, and tryptophan 291–alanine 312. Glutamate 367 is a binding site for [CaMn4O5] cluster. A helical membrane pass occupies residues arginine 447–proline 471.

It belongs to the PsbB/PsbC family. PsbC subfamily. As to quaternary structure, PSII is composed of 1 copy each of membrane proteins PsbA, PsbB, PsbC, PsbD, PsbE, PsbF, PsbH, PsbI, PsbJ, PsbK, PsbL, PsbM, PsbT, PsbX, PsbY, PsbZ, Psb30/Ycf12, at least 3 peripheral proteins of the oxygen-evolving complex and a large number of cofactors. It forms dimeric complexes. The cofactor is Binds multiple chlorophylls and provides some of the ligands for the Ca-4Mn-5O cluster of the oxygen-evolving complex. It may also provide a ligand for a Cl- that is required for oxygen evolution. PSII binds additional chlorophylls, carotenoids and specific lipids.. Phosphorylated on threonine residue(s).

It localises to the plastid. Its subcellular location is the chloroplast thylakoid membrane. Its function is as follows. One of the components of the core complex of photosystem II (PSII). It binds chlorophyll and helps catalyze the primary light-induced photochemical processes of PSII. PSII is a light-driven water:plastoquinone oxidoreductase, using light energy to abstract electrons from H(2)O, generating O(2) and a proton gradient subsequently used for ATP formation. The chain is Photosystem II CP43 reaction center protein from Marchantia polymorpha (Common liverwort).